The sequence spans 628 residues: Chaperone protein DnaK (628 aa).

Threonine 174 carries the phosphothreonine; by autocatalysis modification. The segment at 589 to 628 (AAGGAGPDMGAGAGPDMGAGASNGSAPYGDDVVDGDYKEV) is disordered. The span at 591 to 605 (GGAGPDMGAGAGPDM) shows a compositional bias: gly residues.

It belongs to the heat shock protein 70 family.

Acts as a chaperone. The polypeptide is Chaperone protein DnaK (Lachnospira eligens (strain ATCC 27750 / DSM 3376 / VPI C15-48 / C15-B4) (Eubacterium eligens)).